The primary structure comprises 1713 residues: MSAKVRLKKLEQLLLDGPWRNESSLSVETLLDVLVCLYTECSHSALRRDKYVAEFLEWAKPFTQLVKDMQLHREDFEIIKVIGRGAFGEVAVVKMKNTERIYAMKILNKWEMLKRAETACFREERDVLVNGDCQWITALHYAFQDENYLYLVMDYYVGGDLLTLLSKFEDKLPEDMARFYIGEMVLAIDSIHQLHYVHRDIKPDNVLLDVNGHIRLADFGSCLKMNDDGTVQSSVAVGTPDYISPEILQAMEDGMGKYGPECDWWSLGVCMYEMLYGETPFYAESLVETYGKIMNHEERFQFPSHVTDVSEEAKDLIQRLICSRERRLGQNGIEDFKKHAFFEGLNWENIRNLEAPYIPDVSSPSDTSNFDVDDDVLRNIEILPPGSHTGFSGLHLPFIGFTFTTESCFSDRGSLKSMIQSNTLTKDEDVQRDLENSLQIEAYERRIRRLEQEKLELSRKLQESTQTVQSLHGSTRALGNSNRDKEIKRLNEELERMKSKMADSNRLERQLEDTVTLRQEHEDSTQRLKGLEKQYRLARQEKEELHKQLVEASERLKSQTKELKDAHQQRKRALQEFSELNERMAELRSQKQKVSRQLRDKEEEMEVAMQKIDSMRQDIRKSEKSRKELEARLEDAVAEASKERKLREHSESFSKQMERELETLKVKQGGRGPGATLEHQQEISKIRSELEKKVLFYEEELVRREASHVLEVKNVKKEVHESESHQLALQKEVLMLKDKLEKSKRERHSEMEEAIGAMKDKYERERAMLFDENKKLTAENEKLCSFVDKLTAQNRQLEDELQDLASKKESVAHWEAQIAEIIQWVSDEKDARGYLQALASKMTEELETLRSSSLGSRTLDPLWKVRRSQKLDMSARLELQSALEAEIRAKQLVHEELRKVKDTSLAFESKLKESEAKNRELLEEMQSLKKRMEEKFRADTGLKLPDFQDPIFEYFNTAPLAHDLTFRTSSASDQETQASKLDLSPSVSVATSTEQQEDAARSQQRPSTVPLPNTQALAMAGPKPKAHQFSIKSFPSPTQCSHCTSLMVGLIRQGYACEVCAFSCHVSCKDSAPQVCPIPPEQSKRPLGVDVQRGIGTAYKGYVKVPKPTGVKKGWQRAYAVVCDCKLFLYDLPEGKSTQPGVIASQVLDLRDDEFAVSSVLASDVIHATRRDIPCIFRVTASLLGSPSKTSSLLILTENENEKRKWVGILEGLQAILHKNRLRSQVVHVAQEAYDSSLPLIKTVLAAAIVDGDRIAVGLEEGLYVIELTRDVIVRAADCKKVYQIELAPKEKLILLLCGRNHHVHLYPWTSFDGAEASNFDIKLPETKGCQLIATGTLRKSSSTCLFVAVKRLVLCYEIQRTKPFHRKFNEIVAPGHVQWMAMFKDRLCVGYPSGFSLLSIQGDGQPLDLVNPADPSLAFLSQQSFDALCAVELKSEEYLLCFSHMGLYVDPQGRRSRTQELMWPAAPVACSCSSSHVTVYSEYGVDVFDVRTMEWVQTIGLRRIRPLNSDGSLNLLGCEPPRLIYFKNKFSGTVLNVPDTSDNSKKQMLRTRSKRRFVFKVPEEERLQQRREMLRDPELRSKMISNPTNFNHVAHMGPGDGMQVLMDLPLSAAPTAQEEKQGPAPTGLPRQLPSRNKPYVSWPSSGGSEPGVPVPLRSMSDPDQDFDKEPDSDSTKHSTPSNSSNPSGPPSPNSPHRSQLPLEGLDQPACDA.

The region spanning 76–342 is the Protein kinase domain; sequence FEIIKVIGRG…IEDFKKHAFF (267 aa). ATP-binding positions include 82–90 and Lys105; that span reads IGRGAFGEV. Asp200 functions as the Proton acceptor in the catalytic mechanism. 2 positions are modified to phosphoserine; by autocatalysis: Ser221 and Ser233. Thr239 carries the post-translational modification Phosphothreonine; by autocatalysis. Residues 343–413 form the AGC-kinase C-terminal domain; the sequence is EGLNWENIRN…TTESCFSDRG (71 aa). Thr423 bears the Phosphothreonine mark. Residues 434 to 649 adopt a coiled-coil conformation; the sequence is LENSLQIEAY…ASKERKLREH (216 aa). The disordered stretch occupies residues 461 to 485; that stretch reads LQESTQTVQSLHGSTRALGNSNRDK. Residues 463–481 show a composition bias toward polar residues; the sequence is ESTQTVQSLHGSTRALGNS. Arg671 carries the omega-N-methylarginine modification. Coiled coils occupy residues 681–815 and 882–939; these read QEIS…AHWE and ALEA…FRAD. Phosphoserine is present on Ser927. Position 954 is a phosphotyrosine (Tyr954). 2 stretches are compositionally biased toward polar residues: residues 971–994 and 1001–1014; these read ASDQ…TSTE and RSQQ…LPNT. A disordered region spans residues 971-1014; it reads ASDQETQASKLDLSPSVSVATSTEQQEDAARSQQRPSTVPLPNT. Residues 1026-1076 form a Phorbol-ester/DAG-type zinc finger; sequence AHQFSIKSFPSPTQCSHCTSLMVGLIRQGYACEVCAFSCHVSCKDSAPQVC. The PH domain occupies 1096-1215; the sequence is GTAYKGYVKV…WVGILEGLQA (120 aa). The region spanning 1241–1515 is the CNH domain; the sequence is IKTVLAAAIV…RPLNSDGSLN (275 aa). Residues 1585-1598 enclose the CRIB domain; it reads ISNPTNFNHVAHMG. Residues 1615–1713 form a disordered region; that stretch reads PTAQEEKQGP…EGLDQPACDA (99 aa). Residues 1666–1677 are compositionally biased toward basic and acidic residues; sequence DFDKEPDSDSTK. Phosphoserine is present on residues Ser1682, Ser1684, Ser1688, Ser1692, and Ser1695.

This sequence belongs to the protein kinase superfamily. AGC Ser/Thr protein kinase family. DMPK subfamily. As to quaternary structure, homodimer and homotetramer via the coiled coil regions. Interacts tightly with GTP-bound but not GDP-bound CDC42. Interacts with TJP1; this interaction requires the presence of catalytically active CDC42. Forms a tripartite complex with MYO18A and LURAP1 with the latter acting as an adapter connecting CDC42BPB and MYO18A. LURAP1 binding results in activation of CDC42BPB by abolition of its negative autoregulation. Interacts with STRIP1, STRN3 and SIKE1. Interacts with CPNE4 (via VWFA domain). Interacts with LURAP1. Interacts (via AGC-kinase C-terminal domain) with FAM89B/LRAP25 (via LRR repeat). Forms a tripartite complex with FAM89B/LRAP25 and LIMK1. It depends on Mg(2+) as a cofactor. Post-translationally, proteolytically cleaved by caspases upon apoptosis induction. Expressed in all tissues examined with highest levels in lung and kidney.

The protein localises to the cytoplasm. The protein resides in the cell membrane. It is found in the cell junction. It localises to the cell projection. Its subcellular location is the lamellipodium. The enzyme catalyses L-seryl-[protein] + ATP = O-phospho-L-seryl-[protein] + ADP + H(+). It catalyses the reaction L-threonyl-[protein] + ATP = O-phospho-L-threonyl-[protein] + ADP + H(+). With respect to regulation, maintained in an inactive, closed conformation by an interaction between the kinase domain and the negative autoregulatory C-terminal coiled-coil region. Agonist binding to the phorbol ester binding site disrupts this, releasing the kinase domain to allow N-terminus-mediated dimerization and kinase activation by transautophosphorylation. Inhibited by chelerythrine chloride. In terms of biological role, serine/threonine-protein kinase which is an important downstream effector of CDC42 and plays a role in the regulation of cytoskeleton reorganization and cell migration. Regulates actin cytoskeletal reorganization via phosphorylation of PPP1R12C and MYL9/MLC2. In concert with MYO18A and LURAP1, is involved in modulating lamellar actomyosin retrograde flow that is crucial to cell protrusion and migration. Phosphorylates PPP1R12A. In concert with FAM89B/LRAP25 mediates the targeting of LIMK1 to the lamellipodium resulting in its activation and subsequent phosphorylation of CFL1 which is important for lamellipodial F-actin regulation. The chain is Serine/threonine-protein kinase MRCK beta from Rattus norvegicus (Rat).